Consider the following 534-residue polypeptide: GMP synthase [glutamine-hydrolyzing] (534 aa).

The Glutamine amidotransferase type-1 domain maps to Pro20 to Ser210. Cys97 (nucleophile) is an active-site residue. Active-site residues include His184 and Glu186. A GMPS ATP-PPase domain is found at Trp211–Arg408. Ser238 to Ala244 provides a ligand contact to ATP.

Homodimer.

The enzyme catalyses XMP + L-glutamine + ATP + H2O = GMP + L-glutamate + AMP + diphosphate + 2 H(+). The protein operates within purine metabolism; GMP biosynthesis; GMP from XMP (L-Gln route): step 1/1. Its function is as follows. Catalyzes the synthesis of GMP from XMP. This is GMP synthase [glutamine-hydrolyzing] from Parafrankia sp. (strain EAN1pec).